We begin with the raw amino-acid sequence, 503 residues long: DGEQALQASLSVKEKLQIALCLEKSGVDIMEVGFPISSPGDFKSVQTISQKIKNSRVCSLARCIEKDIDVAGEAMSASNSFRIHIFLATSTLHMESKLRKNFNEIIDMAIFSVKRALRYTDDIEFSCEDASRTTIDNLCRIVEKLISCGVKTINIPDTVGYTIPNELSFIIKNLFEKVPNIHKSTISVHCHDDLGMAVGNSISAIQAGARQIEGTINGIGERAGNTALEEVIMAIKVREDILGVSTNINHKEIYRTSQIVSSICNMPIPSNKAIVGSNAFAHSSGIHQDGVLKNRENYEIIDPISIGLKKVKLNLTSRSGRAAVKHYMNEMGYKENDYNIDELYTDFLKLADKKGQVFDYDLEALAFINKQQDESEYFSLKFFSVQSISNNLSTASVTLLCGKKIYTEASTTSNGPVDAIYQALNRITHFPIVLQKFQLVAKGKGKDALGQVDILVEYKKRKFHGVGLATDIMESSAKAMVNVLNNIWKAKQVNKNLKNLKKQ.

Aspartate 1, histidine 189, histidine 191, and asparagine 225 together coordinate Mn(2+). The 254-residue stretch at aspartate 1–tyrosine 254 folds into the Pyruvate carboxyltransferase domain. Residues serine 379–glutamine 503 form a regulatory domain region.

The protein belongs to the alpha-IPM synthase/homocitrate synthase family. LeuA type 1 subfamily. Homodimer. It depends on Mn(2+) as a cofactor.

It localises to the cytoplasm. The enzyme catalyses 3-methyl-2-oxobutanoate + acetyl-CoA + H2O = (2S)-2-isopropylmalate + CoA + H(+). The protein operates within amino-acid biosynthesis; L-leucine biosynthesis; L-leucine from 3-methyl-2-oxobutanoate: step 1/4. In terms of biological role, catalyzes the condensation of the acetyl group of acetyl-CoA with 3-methyl-2-oxobutanoate (2-ketoisovalerate) to form 3-carboxy-3-hydroxy-4-methylpentanoate (2-isopropylmalate). The sequence is that of 2-isopropylmalate synthase from Buchnera aphidicola subsp. Uroleucon ambrosiae.